We begin with the raw amino-acid sequence, 353 residues long: MSAISDRIFVQEHLAREHEASELSPEEAERLKAEIKELLVQEDAVLVAHYYTDPLLQALAEETGGCVADSLEMARFGNQHPASTLMVCGVRFMGETAKILNPEKTVLMPTLEATCSLDIGCPVEEFSAFCDEHSDRTVVVYANTSAAVKARADWVVTSSIALDIVEYLHERGEKIIWAPDKHLGGYVKNKTGADVLLWDGSCIVHEEFKSKGLSDLKQLYPDAAVLVHPESPEAVVEMADVVGSTSQLINAVKSMSNEQFIVATDAGIFYKMQQMAPEKTLIEAPTAGNGATCRSCAHCPWMAMNGLENLRDVLISKRQEIIVEADLREKALIPLQRMLNFSKERQMAVKGNA.

The iminosuccinate site is built by His-49 and Ser-70. Cys-115 provides a ligand contact to [4Fe-4S] cluster. Residues 141–143 and Ser-158 each bind iminosuccinate; that span reads YAN. Cys-202 provides a ligand contact to [4Fe-4S] cluster. Residues 228 to 230 and Thr-245 each bind iminosuccinate; that span reads HPE. Cys-299 contributes to the [4Fe-4S] cluster binding site.

Belongs to the quinolinate synthase family. Type 1 subfamily. It depends on [4Fe-4S] cluster as a cofactor.

Its subcellular location is the cytoplasm. The catalysed reaction is iminosuccinate + dihydroxyacetone phosphate = quinolinate + phosphate + 2 H2O + H(+). It functions in the pathway cofactor biosynthesis; NAD(+) biosynthesis; quinolinate from iminoaspartate: step 1/1. Its function is as follows. Catalyzes the condensation of iminoaspartate with dihydroxyacetone phosphate to form quinolinate. The chain is Quinolinate synthase from Hahella chejuensis (strain KCTC 2396).